Consider the following 600-residue polypeptide: Alpha pinene synthase, chloroplastic (600 aa).

The tract at residues 1–26 is disordered; it reads MSSISMHARPLNISAANNHHPSWDRR. The N-terminal 31 residues, 1–31, are a transit peptide targeting the chloroplast; that stretch reads MSSISMHARPLNISAANNHHPSWDRRVSKPR. 4 residues coordinate Mg(2+): Asp-354, Asp-358, Asp-498, and Glu-506. A DDXXD motif motif is present at residues 354-358; the sequence is DDVYD.

It belongs to the terpene synthase family. Tpsa subfamily. It depends on Mg(2+) as a cofactor. Mn(2+) serves as cofactor. As to expression, barely detectable in leaves.

The protein resides in the plastid. It localises to the chloroplast. It catalyses the reaction (2E)-geranyl diphosphate = alpha-pinene + diphosphate. Its pathway is secondary metabolite biosynthesis; terpenoid biosynthesis. Its function is as follows. Monoterpene synthase involved in the biosynthesis of volatile compounds widely used in aromatherapy and folk medicine, and present in culinary herbs. Mediates the conversion of (2E)-geranyl diphosphate (GPP) into alpha-pinene and, as minor compounds, into alpha-phellandrene, limonene and alpha-terpinolene. This Lavandula stoechas (Butterfly lavender) protein is Alpha pinene synthase, chloroplastic.